Reading from the N-terminus, the 245-residue chain is Uridylate kinase (245 aa).

16–19 provides a ligand contact to ATP; it reads KLSG. The interval 24–29 is involved in allosteric activation by GTP; sequence GDNGFG. Gly59 is a binding site for UMP. ATP is bound by residues Gly60 and Arg64. UMP contacts are provided by residues Asp78 and 139–146; that span reads NGAPFFTT. Residues Asn167, Tyr173, and Asp176 each contribute to the ATP site.

Belongs to the UMP kinase family. As to quaternary structure, homohexamer.

The protein resides in the cytoplasm. The catalysed reaction is UMP + ATP = UDP + ADP. Its pathway is pyrimidine metabolism; CTP biosynthesis via de novo pathway; UDP from UMP (UMPK route): step 1/1. Allosterically activated by GTP. Inhibited by UTP. Its function is as follows. Catalyzes the reversible phosphorylation of UMP to UDP. This is Uridylate kinase from Deinococcus radiodurans (strain ATCC 13939 / DSM 20539 / JCM 16871 / CCUG 27074 / LMG 4051 / NBRC 15346 / NCIMB 9279 / VKM B-1422 / R1).